The sequence spans 862 residues: Protein SEY1 (862 aa).

Over 1–747 (MVSNGHFASA…KRSAIGGMTQ (747 aa)) the chain is Cytoplasmic. The GB1/RHD3-type G domain occupies 49–306 (GFNYHLISVF…IPADGFAVYA (258 aa)). 59-66 (GSQSTGKS) contributes to the GTP binding site. Residues 481–507 (SNYTQELALYQKDLEKISAQLRKDEMR) are a coiled coil. A helical membrane pass occupies residues 748–768 (IPVYFYILLLALGWNEIVAVL). Residues 769–771 (RNP) are Lumenal-facing. Residues 772–792 (LYFFMLFLCAVGAFVTYQLNL) traverse the membrane as a helical segment. Over 793–862 (WGPMIKMAEA…DDDDEDEGSW (70 aa)) the chain is Cytoplasmic. The segment at 819–862 (LEPSEAGPHAARYKNSTEEYEMSNVKAPQRTNSGDDDDEDEGSW) is disordered. The segment covering 852 to 862 (GDDDDEDEGSW) has biased composition (acidic residues).

This sequence belongs to the TRAFAC class dynamin-like GTPase superfamily. GB1/RHD3 GTPase family. RHD3 subfamily.

It is found in the endoplasmic reticulum membrane. Functionally, cooperates with the reticulon proteins and tubule-shaping DP1 family proteins to generate and maintain the structure of the tubular endoplasmic reticulum network. Has GTPase activity, which is required for its function in ER organization. The chain is Protein SEY1 from Uncinocarpus reesii (strain UAMH 1704).